A 239-amino-acid chain; its full sequence is 4-hydroxy-tetrahydrodipicolinate reductase (239 aa).

NAD(+) is bound by residues 9 to 14, 78 to 80, and 104 to 107; these read GINGKI, GTT, and APNF. Residue His134 is the Proton donor/acceptor of the active site. His135 lines the (S)-2,3,4,5-tetrahydrodipicolinate pocket. The active-site Proton donor is the Lys138. A (S)-2,3,4,5-tetrahydrodipicolinate-binding site is contributed by 144-145; that stretch reads GT.

Belongs to the DapB family.

The protein resides in the cytoplasm. It catalyses the reaction (S)-2,3,4,5-tetrahydrodipicolinate + NAD(+) + H2O = (2S,4S)-4-hydroxy-2,3,4,5-tetrahydrodipicolinate + NADH + H(+). The enzyme catalyses (S)-2,3,4,5-tetrahydrodipicolinate + NADP(+) + H2O = (2S,4S)-4-hydroxy-2,3,4,5-tetrahydrodipicolinate + NADPH + H(+). The protein operates within amino-acid biosynthesis; L-lysine biosynthesis via DAP pathway; (S)-tetrahydrodipicolinate from L-aspartate: step 4/4. Functionally, catalyzes the conversion of 4-hydroxy-tetrahydrodipicolinate (HTPA) to tetrahydrodipicolinate. The sequence is that of 4-hydroxy-tetrahydrodipicolinate reductase from Coxiella burnetii (strain CbuG_Q212) (Coxiella burnetii (strain Q212)).